A 292-amino-acid polypeptide reads, in one-letter code: 4-hydroxy-tetrahydrodipicolinate synthase (292 aa).

Position 45 (Thr45) interacts with pyruvate. Catalysis depends on Tyr133, which acts as the Proton donor/acceptor. The Schiff-base intermediate with substrate role is filled by Lys161. Residue Ile203 coordinates pyruvate.

It belongs to the DapA family. In terms of assembly, homotetramer; dimer of dimers.

Its subcellular location is the cytoplasm. The catalysed reaction is L-aspartate 4-semialdehyde + pyruvate = (2S,4S)-4-hydroxy-2,3,4,5-tetrahydrodipicolinate + H2O + H(+). The protein operates within amino-acid biosynthesis; L-lysine biosynthesis via DAP pathway; (S)-tetrahydrodipicolinate from L-aspartate: step 3/4. Functionally, catalyzes the condensation of (S)-aspartate-beta-semialdehyde [(S)-ASA] and pyruvate to 4-hydroxy-tetrahydrodipicolinate (HTPA). The protein is 4-hydroxy-tetrahydrodipicolinate synthase of Aromatoleum aromaticum (strain DSM 19018 / LMG 30748 / EbN1) (Azoarcus sp. (strain EbN1)).